A 443-amino-acid polypeptide reads, in one-letter code: tRNA-2-methylthio-N(6)-dimethylallyladenosine synthase (443 aa).

The region spanning 1–114 is the MTTase N-terminal domain; it reads MRFYIKTFGC…VTEAVKRALQ (114 aa). [4Fe-4S] cluster is bound by residues cysteine 10, cysteine 46, cysteine 79, cysteine 150, cysteine 154, and cysteine 157. One can recognise a Radical SAM core domain in the interval 136–367; it reads RSSKHHAWVT…MNLQKRINRK (232 aa). The 62-residue stretch at 370-431 folds into the TRAM domain; it reads ERYKGKTVRV…AGPLYGKVVW (62 aa).

It belongs to the methylthiotransferase family. MiaB subfamily. In terms of assembly, monomer. It depends on [4Fe-4S] cluster as a cofactor.

It localises to the cytoplasm. It carries out the reaction N(6)-dimethylallyladenosine(37) in tRNA + (sulfur carrier)-SH + AH2 + 2 S-adenosyl-L-methionine = 2-methylsulfanyl-N(6)-dimethylallyladenosine(37) in tRNA + (sulfur carrier)-H + 5'-deoxyadenosine + L-methionine + A + S-adenosyl-L-homocysteine + 2 H(+). Functionally, catalyzes the methylthiolation of N6-(dimethylallyl)adenosine (i(6)A), leading to the formation of 2-methylthio-N6-(dimethylallyl)adenosine (ms(2)i(6)A) at position 37 in tRNAs that read codons beginning with uridine. The chain is tRNA-2-methylthio-N(6)-dimethylallyladenosine synthase from Thermotoga sp. (strain RQ2).